Reading from the N-terminus, the 466-residue chain is 3-isopropylmalate dehydratase large subunit (466 aa).

Positions 347, 407, and 410 each coordinate [4Fe-4S] cluster.

This sequence belongs to the aconitase/IPM isomerase family. LeuC type 1 subfamily. In terms of assembly, heterodimer of LeuC and LeuD. The cofactor is [4Fe-4S] cluster.

The catalysed reaction is (2R,3S)-3-isopropylmalate = (2S)-2-isopropylmalate. The protein operates within amino-acid biosynthesis; L-leucine biosynthesis; L-leucine from 3-methyl-2-oxobutanoate: step 2/4. Functionally, catalyzes the isomerization between 2-isopropylmalate and 3-isopropylmalate, via the formation of 2-isopropylmaleate. The polypeptide is 3-isopropylmalate dehydratase large subunit (Klebsiella pneumoniae (strain 342)).